The following is a 417-amino-acid chain: Zinc-finger homeodomain protein 4 (417 aa).

The span at 1-12 shows a compositional bias: polar residues; that stretch reads MVSILQLQTRTE. 2 disordered regions span residues 1–22 and 31–50; these read MVSILQLQTRTEASPASSASAA and RQQQEQEGEEEEEEFEFQER. Residues 13–22 are compositionally biased toward low complexity; the sequence is ASPASSASAA. Over residues 36–46 the composition is skewed to acidic residues; sequence QEGEEEEEEFE. Residues 145–194 form a ZF-HD dimerization-type; degenerate zinc finger; it reads YRECLKNHAAAIGGNATDGCGEFMPSGEEGSLEALKCSACGCHRNFHRKE. Disordered regions lie at residues 281 to 309 and 361 to 417; these read DEMDVSGGGGGVGRGGGSSSSSKKRFRTK and NLAK…LKLE. A compositionally biased stretch (gly residues) spans 286–298; the sequence is SGGGGGVGRGGGS. Residues 303-366 constitute a DNA-binding region (homeobox); that stretch reads KKRFRTKFTA…NNKHNLAKKP (64 aa). The span at 368 to 417 shows a compositional bias: pro residues; it reads PSSPPPPPQIPPMSMPPSPPPPQIPPMSMPPSPPPMPMPMPPSPPQLKLE.

Homo- and heterodimer with other ZFHD proteins.

It is found in the nucleus. Functionally, putative transcription factor. The sequence is that of Zinc-finger homeodomain protein 4 (ZHD4) from Oryza sativa subsp. japonica (Rice).